A 430-amino-acid chain; its full sequence is Trigger factor (430 aa).

The region spanning 163 to 248 is the PPIase FKBP-type domain; sequence GNIAIIDFKG…IKDIKVKELP (86 aa).

The protein belongs to the FKBP-type PPIase family. Tig subfamily.

It is found in the cytoplasm. The catalysed reaction is [protein]-peptidylproline (omega=180) = [protein]-peptidylproline (omega=0). Functionally, involved in protein export. Acts as a chaperone by maintaining the newly synthesized protein in an open conformation. Functions as a peptidyl-prolyl cis-trans isomerase. This chain is Trigger factor, found in Clostridium botulinum (strain Langeland / NCTC 10281 / Type F).